Consider the following 296-residue polypeptide: Acetylglutamate kinase (296 aa).

Substrate-binding positions include glycine 67 to glycine 68, arginine 89, and asparagine 194.

It belongs to the acetylglutamate kinase family. ArgB subfamily.

Its subcellular location is the cytoplasm. It carries out the reaction N-acetyl-L-glutamate + ATP = N-acetyl-L-glutamyl 5-phosphate + ADP. Its pathway is amino-acid biosynthesis; L-arginine biosynthesis; N(2)-acetyl-L-ornithine from L-glutamate: step 2/4. In terms of biological role, catalyzes the ATP-dependent phosphorylation of N-acetyl-L-glutamate. This Syntrophus aciditrophicus (strain SB) protein is Acetylglutamate kinase.